An 859-amino-acid chain; its full sequence is Leucine--tRNA ligase (859 aa).

Positions 42–52 match the 'HIGH' region motif; that stretch reads PYPSGRLHMGH. The 'KMSKS' region motif lies at 618-622; the sequence is KMSKS. Lysine 621 is an ATP binding site.

This sequence belongs to the class-I aminoacyl-tRNA synthetase family.

It is found in the cytoplasm. It carries out the reaction tRNA(Leu) + L-leucine + ATP = L-leucyl-tRNA(Leu) + AMP + diphosphate. The polypeptide is Leucine--tRNA ligase (Shewanella oneidensis (strain ATCC 700550 / JCM 31522 / CIP 106686 / LMG 19005 / NCIMB 14063 / MR-1)).